Consider the following 372-residue polypeptide: Methylthioribose-1-phosphate isomerase (372 aa).

Residue aspartate 252 is the Proton donor of the active site.

It belongs to the eIF-2B alpha/beta/delta subunits family. MtnA subfamily.

The protein localises to the cytoplasm. It localises to the nucleus. It carries out the reaction 5-(methylsulfanyl)-alpha-D-ribose 1-phosphate = 5-(methylsulfanyl)-D-ribulose 1-phosphate. It functions in the pathway amino-acid biosynthesis; L-methionine biosynthesis via salvage pathway; L-methionine from S-methyl-5-thio-alpha-D-ribose 1-phosphate: step 1/6. Its function is as follows. Catalyzes the interconversion of methylthioribose-1-phosphate (MTR-1-P) into methylthioribulose-1-phosphate (MTRu-1-P). In Yarrowia lipolytica (strain CLIB 122 / E 150) (Yeast), this protein is Methylthioribose-1-phosphate isomerase.